A 387-amino-acid polypeptide reads, in one-letter code: Succinyl-diaminopimelate desuccinylase (387 aa).

H74 is a Zn(2+) binding site. D76 is an active-site residue. Position 107 (D107) interacts with Zn(2+). Residue E142 is the Proton acceptor of the active site. 3 residues coordinate Zn(2+): E143, E171, and H360.

The protein belongs to the peptidase M20A family. DapE subfamily. In terms of assembly, homodimer. Zn(2+) is required as a cofactor. It depends on Co(2+) as a cofactor.

It catalyses the reaction N-succinyl-(2S,6S)-2,6-diaminopimelate + H2O = (2S,6S)-2,6-diaminopimelate + succinate. It functions in the pathway amino-acid biosynthesis; L-lysine biosynthesis via DAP pathway; LL-2,6-diaminopimelate from (S)-tetrahydrodipicolinate (succinylase route): step 3/3. In terms of biological role, catalyzes the hydrolysis of N-succinyl-L,L-diaminopimelic acid (SDAP), forming succinate and LL-2,6-diaminopimelate (DAP), an intermediate involved in the bacterial biosynthesis of lysine and meso-diaminopimelic acid, an essential component of bacterial cell walls. In Rhodopseudomonas palustris (strain ATCC BAA-98 / CGA009), this protein is Succinyl-diaminopimelate desuccinylase.